Reading from the N-terminus, the 115-residue chain is T cell receptor beta variable 2 (115 aa).

A signal peptide spans M1–T19. Residues P21–E115 enclose the Ig-like domain. A disulfide bridge connects residues C42 and C111. N93 carries N-linked (GlcNAc...) asparagine glycosylation.

Alpha-beta TR is a heterodimer composed of an alpha and beta chain; disulfide-linked. The alpha-beta TR is associated with the transmembrane signaling CD3 coreceptor proteins to form the TR-CD3 (TcR or TCR). The assembly of alpha-beta TR heterodimers with CD3 occurs in the endoplasmic reticulum where a single alpha-beta TR heterodimer associates with one CD3D-CD3E heterodimer, one CD3G-CD3E heterodimer and one CD247 homodimer forming a stable octameric structure. CD3D-CD3E and CD3G-CD3E heterodimers preferentially associate with TR alpha and TR beta chains, respectively. The association of the CD247 homodimer is the last step of TcR assembly in the endoplasmic reticulum and is required for transport to the cell surface.

It is found in the cell membrane. Functionally, v region of the variable domain of T cell receptor (TR) beta chain that participates in the antigen recognition. Alpha-beta T cell receptors are antigen specific receptors which are essential to the immune response and are present on the cell surface of T lymphocytes. Recognize peptide-major histocompatibility (MH) (pMH) complexes that are displayed by antigen presenting cells (APC), a prerequisite for efficient T cell adaptive immunity against pathogens. Binding of alpha-beta TR to pMH complex initiates TR-CD3 clustering on the cell surface and intracellular activation of LCK that phosphorylates the ITAM motifs of CD3G, CD3D, CD3E and CD247 enabling the recruitment of ZAP70. In turn ZAP70 phosphorylates LAT, which recruits numerous signaling molecules to form the LAT signalosome. The LAT signalosome propagates signal branching to three major signaling pathways, the calcium, the mitogen-activated protein kinase (MAPK) kinase and the nuclear factor NF-kappa-B (NF-kB) pathways, leading to the mobilization of transcription factors that are critical for gene expression and essential for T cell growth and differentiation. The T cell repertoire is generated in the thymus, by V-(D)-J rearrangement. This repertoire is then shaped by intrathymic selection events to generate a peripheral T cell pool of self-MH restricted, non-autoaggressive T cells. Post-thymic interaction of alpha-beta TR with the pMH complexes shapes TR structural and functional avidity. The polypeptide is T cell receptor beta variable 2 (Homo sapiens (Human)).